A 342-amino-acid polypeptide reads, in one-letter code: GTPase Obg (342 aa).

The 159-residue stretch at Met1–Leu159 folds into the Obg domain. The OBG-type G domain occupies Ala160–Asp330. GTP is bound by residues Gly166–Ser173, Phe191–Ile195, Asp213–Gly216, Asn280–Asp283, and Ser311–Val313. Residues Ser173 and Thr193 each coordinate Mg(2+).

It belongs to the TRAFAC class OBG-HflX-like GTPase superfamily. OBG GTPase family. Monomer. It depends on Mg(2+) as a cofactor.

It is found in the cytoplasm. An essential GTPase which binds GTP, GDP and possibly (p)ppGpp with moderate affinity, with high nucleotide exchange rates and a fairly low GTP hydrolysis rate. Plays a role in control of the cell cycle, stress response, ribosome biogenesis and in those bacteria that undergo differentiation, in morphogenesis control. This Nostoc punctiforme (strain ATCC 29133 / PCC 73102) protein is GTPase Obg.